The following is a 407-amino-acid chain: Nicotinate phosphoribosyltransferase (407 aa).

H224 is subject to Phosphohistidine; by autocatalysis.

The protein belongs to the NAPRTase family. Post-translationally, transiently phosphorylated on a His residue during the reaction cycle. Phosphorylation strongly increases the affinity for substrates and increases the rate of nicotinate D-ribonucleotide production. Dephosphorylation regenerates the low-affinity form of the enzyme, leading to product release.

The catalysed reaction is nicotinate + 5-phospho-alpha-D-ribose 1-diphosphate + ATP + H2O = nicotinate beta-D-ribonucleotide + ADP + phosphate + diphosphate. The protein operates within cofactor biosynthesis; NAD(+) biosynthesis; nicotinate D-ribonucleotide from nicotinate: step 1/1. Its function is as follows. Catalyzes the synthesis of beta-nicotinate D-ribonucleotide from nicotinate and 5-phospho-D-ribose 1-phosphate at the expense of ATP. The sequence is that of Nicotinate phosphoribosyltransferase from Pseudomonas syringae pv. tomato (strain ATCC BAA-871 / DC3000).